A 114-amino-acid chain; its full sequence is U10-agatoxin-Ao1a (114 aa).

Residues 1–15 (MCVATCLCTFAYVLA) form the signal peptide. The propeptide occupies 16-32 (KSDEGENLISKVEETQR). 5 disulfides stabilise this stretch: cysteine 34/cysteine 53, cysteine 41/cysteine 59, cysteine 50/cysteine 86, cysteine 52/cysteine 76, and cysteine 61/cysteine 74. The interval 95-114 (GSQNPSLCKDPNPRRRRHGK) is disordered.

This sequence belongs to the neurotoxin 04 (omega-agtx) family. 03 (type II/III omega-agtx) subfamily. In terms of tissue distribution, expressed by the venom gland.

It localises to the secreted. Inhibits voltage-gated calcium channels (Cav). This is U10-agatoxin-Ao1a from Agelena orientalis (Funnel-web spider).